A 435-amino-acid chain; its full sequence is ATP-dependent protease ATPase subunit HslU (435 aa).

ATP-binding positions include Ile-18, 60–65 (GVGKTE), Asp-248, Glu-313, and Arg-385.

It belongs to the ClpX chaperone family. HslU subfamily. A double ring-shaped homohexamer of HslV is capped on each side by a ring-shaped HslU homohexamer. The assembly of the HslU/HslV complex is dependent on binding of ATP.

The protein localises to the cytoplasm. ATPase subunit of a proteasome-like degradation complex; this subunit has chaperone activity. The binding of ATP and its subsequent hydrolysis by HslU are essential for unfolding of protein substrates subsequently hydrolyzed by HslV. HslU recognizes the N-terminal part of its protein substrates and unfolds these before they are guided to HslV for hydrolysis. The protein is ATP-dependent protease ATPase subunit HslU of Allorhizobium ampelinum (strain ATCC BAA-846 / DSM 112012 / S4) (Agrobacterium vitis (strain S4)).